We begin with the raw amino-acid sequence, 803 residues long: Exo-1,4-beta-xylosidase xlnD (803 aa).

The N-terminal stretch at 1 to 18 (MRSLISVAVLSALPTAFS) is a signal peptide. 6 N-linked (GlcNAc...) asparagine glycosylation sites follow: asparagine 21, asparagine 44, asparagine 85, asparagine 122, asparagine 140, and asparagine 234. Residue aspartate 307 is part of the active site. N-linked (GlcNAc...) asparagine glycosylation is found at asparagine 437, asparagine 474, asparagine 515, asparagine 611, asparagine 676, and asparagine 698.

This sequence belongs to the glycosyl hydrolase 3 family.

The protein localises to the secreted. The enzyme catalyses Hydrolysis of (1-&gt;4)-beta-D-xylans, to remove successive D-xylose residues from the non-reducing termini.. Its pathway is glycan degradation; xylan degradation. In terms of biological role, xylan 1,4-beta-xylosidase involved in the hydrolysis of xylan, a major structural heterogeneous polysaccharide found in plant biomass representing the second most abundant polysaccharide in the biosphere, after cellulose. The polypeptide is Exo-1,4-beta-xylosidase xlnD (xlnD) (Emericella nidulans (strain FGSC A4 / ATCC 38163 / CBS 112.46 / NRRL 194 / M139) (Aspergillus nidulans)).